The following is a 1450-amino-acid chain: Phospholipase B1, membrane-associated (1450 aa).

Positions 1–27 are cleaved as a signal peptide; sequence MESWPGVSLVGLLLLLLLGQGPSQIHG. The Extracellular portion of the chain corresponds to 28 to 1422; the sequence is SSGENTSQPQ…KAKENSNTLY (1395 aa). N-linked (GlcNAc...) asparagine glycans are attached at residues asparagine 32, asparagine 45, and asparagine 179. 3 repeat units span residues 41-351, 366-711, and 712-1058. The tract at residues 41–1407 is 4 X 308-326 AA approximate repeats; that stretch reads RTLKNFSFPC…NPFLYTVRNS (1367 aa). Residues serine 404, aspartate 518, and histidine 659 contribute to the active site. Asparagine 699 is a glycosylation site (N-linked (GlcNAc...) asparagine). A compositionally biased stretch (polar residues) spans 708–720; that stretch reads TKNSNLGHGTSMS. The tract at residues 708–734 is disordered; that stretch reads TKNSNLGHGTSMSCEEKAPSASPPTSV. N-linked (GlcNAc...) asparagine glycans are attached at residues asparagine 787, asparagine 801, asparagine 844, asparagine 880, asparagine 926, asparagine 1059, asparagine 1226, asparagine 1280, asparagine 1383, and asparagine 1387. The stretch at 1068–1407 is repeat 4; the sequence is IENWGSDFLC…NPFLYTVRNS (340 aa). Residues 1408 to 1450 form a necessary for membrane localization region; the sequence is QILLDKAKENSNTLYWAVPVAAVGGLVVGILGMMLWRTVRLVQ. Residues 1423 to 1443 form a helical membrane-spanning segment; it reads WAVPVAAVGGLVVGILGMMLW. The Cytoplasmic portion of the chain corresponds to 1444 to 1450; the sequence is RTVRLVQ.

This sequence belongs to the 'GDSL' lipolytic enzyme family. Phospholipase B1 subfamily. In terms of processing, undergoes proteolytic cleavage in the ileum. In terms of tissue distribution, expressed in the ileum mucosa, Paneth cells spermatocytes, spermatids and sperm (at protein level). Expressed in the ileum, jejunum, esophagus and testis.

It localises to the apical cell membrane. It catalyses the reaction a 1,2-diacyl-sn-glycero-3-phosphocholine + H2O = a 1-acyl-sn-glycero-3-phosphocholine + a fatty acid + H(+). The catalysed reaction is a 1-O-alkyl-2-acyl-sn-glycero-3-phosphocholine + H2O = a 1-O-alkyl-sn-glycero-3-phosphocholine + a fatty acid + H(+). It carries out the reaction a 1-acyl-sn-glycero-3-phosphocholine + H2O = sn-glycerol 3-phosphocholine + a fatty acid + H(+). The enzyme catalyses a triacylglycerol + H2O = a diacylglycerol + a fatty acid + H(+). It catalyses the reaction 1,2-dihexadecanoyl-sn-glycero-3-phosphocholine + H2O = 1-hexadecanoyl-sn-glycero-3-phosphocholine + hexadecanoate + H(+). The catalysed reaction is 1-hexadecanoyl-2-(9Z-octadecenoyl)-sn-glycero-3-phosphocholine + H2O = 1-hexadecanoyl-sn-glycero-3-phosphocholine + (9Z)-octadecenoate + H(+). It carries out the reaction 1,2-di-(9Z-octadecenoyl)-sn-glycero-3-phosphocholine + H2O = 1-(9Z-octadecenoyl)-sn-glycero-3-phosphocholine + (9Z)-octadecenoate + H(+). The enzyme catalyses 1-hexadecanoyl-2-(9Z,12Z-octadecadienoyl)-sn-glycero-3-phosphocholine + H2O = (9Z,12Z)-octadecadienoate + 1-hexadecanoyl-sn-glycero-3-phosphocholine + H(+). It catalyses the reaction 1-hexadecanoyl-2-(9Z,12Z-octadecadienoyl)-sn-glycero-3-phosphocholine + H2O = 2-(9Z,12Z-octadecadienoyl)-sn-glycero-3-phosphocholine + hexadecanoate + H(+). The catalysed reaction is 1-hexadecanoyl-2-(9Z-octadecenoyl)-sn-glycero-3-phosphoethanolamine + H2O = 1-hexadecanoyl-sn-glycero-3-phosphoethanolamine + (9Z)-octadecenoate + H(+). It carries out the reaction 1-hexadecanoyl-2-(9Z-octadecenoyl)-sn-glycero-3-phospho-(1'-sn-glycerol) + H2O = 1-hexadecanoyl-sn-glycero-3-phospho-(1'-sn-glycerol) + (9Z)-octadecenoate + H(+). The enzyme catalyses 1,2-dihexadecanoyl-sn-glycero-3-phosphocholine + 2 H2O = sn-glycerol 3-phosphocholine + 2 hexadecanoate + 2 H(+). It catalyses the reaction 1-O-hexadecyl-2-(9Z)-octadecenoyl-sn-glycero-3-phosphocholine + H2O = 1-O-hexadecyl-sn-glycero-3-phosphocholine + (9Z)-octadecenoate + H(+). The catalysed reaction is 1-hexadecanoyl-sn-glycero-3-phosphocholine + H2O = sn-glycerol 3-phosphocholine + hexadecanoate + H(+). It carries out the reaction 1,2,3-tri-(9Z-octadecenoyl)-glycerol + H2O = di-(9Z)-octadecenoylglycerol + (9Z)-octadecenoate + H(+). The enzyme catalyses 1-hexadecanoyl-2-(9Z)-octadecenoyl-3-octadecanoyl-sn-glycerol + H2O = 1-hexadecanoyl-2-(9Z-octadecenoyl)-sn-glycerol + octadecanoate + H(+). It catalyses the reaction 1,3-dihexadecanoyl-2-(9Z-octadecenoyl)glycerol + H2O = 1,3-dihexadecanoylglycerol + (9Z)-octadecenoate + H(+). The catalysed reaction is 1,3-dihexadecanoyl-2-(9Z-octadecenoyl)glycerol + H2O = 1-hexadecanoyl-2-(9Z-octadecenoyl)-glycerol + hexadecanoate + H(+). It carries out the reaction 1-hexadecanoyl-2-(9Z)-octadecenoyl-3-octadecanoyl-sn-glycerol + H2O = 1-hexadecanoyl-3-octadecanoyl-sn-glycerol + (9Z)-octadecenoate + H(+). The enzyme catalyses 1-hexadecanoyl-2-(9Z)-octadecenoyl-3-octadecanoyl-sn-glycerol + H2O = 2-(9Z-octadecenoyl)-3-octadecanoyl-sn-glycerol + hexadecanoate + H(+). It catalyses the reaction 1-octadecanoyl-2-(9Z,12Z)-octadecadienoyl-sn-glycerol + H2O = 1-octadecanoyl-sn-glycerol + (9Z,12Z)-octadecadienoate + H(+). The catalysed reaction is 1,2-di-(9Z-octadecenoyl)-sn-glycerol + H2O = 1-(9Z-octadecenoyl)-sn-glycerol + (9Z)-octadecenoate + H(+). It carries out the reaction 2,3-di-(9Z)-octadecenoyl-sn-glycerol + H2O = 3-(9Z-octadecenoyl)-sn-glycerol + (9Z)-octadecenoate + H(+). The enzyme catalyses 1,3-di-(9Z-octadecenoyl)-glycerol + H2O = 1-(9Z-octadecenoyl)-glycerol + (9Z)-octadecenoate + H(+). It catalyses the reaction 1-(9Z-octadecenoyl)-glycerol + H2O = glycerol + (9Z)-octadecenoate + H(+). The catalysed reaction is 2-(9Z-octadecenoyl)-glycerol + H2O = glycerol + (9Z)-octadecenoate + H(+). Up-regulated by bile acids such as deoxycholate. Inhibited by diisopropyl fluorophosphate. Functionally, calcium-independent membrane-associated phospholipase that catalyzes complete diacylation of phospholipids by hydrolyzing both sn-1 and sn-2 fatty acyl chains attached to the glycerol backbone (phospholipase B activity). Has dual phospholipase and lysophospholipase activities toward diacylphospholipids. Preferentially cleaves sn-2 ester bonds over sn-1 bonds. Acts as a lipase toward glycerolipid substrates. Hydrolyzes fatty acyl chains of diacylglycerols with preference for the sn-2 position and of triacylglycerols with not positional selectivity. May also hydrolyze long chain retinyl esters such as retinyl palmitate. May contribute to digestion of dietary phospholipids, glycerolipids and retinoids, facilitating lipid absorption at the brush border. In Rattus norvegicus (Rat), this protein is Phospholipase B1, membrane-associated (Plb1).